The following is a 355-amino-acid chain: Probable dual-specificity RNA methyltransferase RlmN (355 aa).

A disordered region spans residues Met1–Ser20. The Proton acceptor role is filled by Glu107. The 229-residue stretch at Thr113 to Glu341 folds into the Radical SAM core domain. Cys120 and Cys346 form a disulfide bridge. Residues Cys127, Cys131, and Cys134 each contribute to the [4Fe-4S] cluster site. S-adenosyl-L-methionine contacts are provided by residues Gly174–Glu175, Ser204, Ser227–His229, and Asn303. The S-methylcysteine intermediate role is filled by Cys346.

It belongs to the radical SAM superfamily. RlmN family. The cofactor is [4Fe-4S] cluster.

It is found in the cytoplasm. It catalyses the reaction adenosine(2503) in 23S rRNA + 2 reduced [2Fe-2S]-[ferredoxin] + 2 S-adenosyl-L-methionine = 2-methyladenosine(2503) in 23S rRNA + 5'-deoxyadenosine + L-methionine + 2 oxidized [2Fe-2S]-[ferredoxin] + S-adenosyl-L-homocysteine. The catalysed reaction is adenosine(37) in tRNA + 2 reduced [2Fe-2S]-[ferredoxin] + 2 S-adenosyl-L-methionine = 2-methyladenosine(37) in tRNA + 5'-deoxyadenosine + L-methionine + 2 oxidized [2Fe-2S]-[ferredoxin] + S-adenosyl-L-homocysteine. Specifically methylates position 2 of adenine 2503 in 23S rRNA and position 2 of adenine 37 in tRNAs. This is Probable dual-specificity RNA methyltransferase RlmN from Nostoc sp. (strain PCC 7120 / SAG 25.82 / UTEX 2576).